The sequence spans 343 residues: Dimethyladenosine transferase 1, mitochondrial (343 aa).

Residues 28–31 (QNFL), Asn-29, Leu-31, Gly-56, Glu-78, Asp-133, and Asn-169 each bind S-adenosyl-L-methionine.

Belongs to the class I-like SAM-binding methyltransferase superfamily. rRNA adenine N(6)-methyltransferase family. KsgA subfamily.

Its subcellular location is the mitochondrion. Functionally, probable S-adenosyl-L-methionine-dependent methyltransferase which specifically dimethylates mitochondrial 12S rRNA at the conserved stem loop. Also required for basal transcription of mitochondrial DNA. Stimulates transcription independently of the methyltransferase activity. The protein is Dimethyladenosine transferase 1, mitochondrial of Vermamoeba vermiformis (Amoeba).